A 124-amino-acid polypeptide reads, in one-letter code: Small ribosomal subunit protein uS12 (124 aa).

Residues 1–25 (MATINQLVRKPRQATTYKSASPALD) are disordered. Asp89 carries the 3-methylthioaspartic acid modification.

Belongs to the universal ribosomal protein uS12 family. In terms of assembly, part of the 30S ribosomal subunit. Contacts proteins S8 and S17. May interact with IF1 in the 30S initiation complex.

In terms of biological role, with S4 and S5 plays an important role in translational accuracy. Its function is as follows. Interacts with and stabilizes bases of the 16S rRNA that are involved in tRNA selection in the A site and with the mRNA backbone. Located at the interface of the 30S and 50S subunits, it traverses the body of the 30S subunit contacting proteins on the other side and probably holding the rRNA structure together. The combined cluster of proteins S8, S12 and S17 appears to hold together the shoulder and platform of the 30S subunit. The protein is Small ribosomal subunit protein uS12 of Stenotrophomonas maltophilia (strain R551-3).